A 318-amino-acid chain; its full sequence is V-set and immunoglobulin domain-containing protein 1 (318 aa).

Positions 1–19 (MSFLLFITLGLSLTALSHC) are cleaved as a signal peptide. Positions 20–131 (VQVTIQNPII…SSGQGKILLT (112 aa)) constitute an Ig-like V-type domain. Over 20–233 (VQVTIQNPII…TGGEGGVIAA (214 aa)) the chain is Extracellular. Cystine bridges form between Cys41/Cys114 and Cys157/Cys207. The 88-residue stretch at 136–223 (PSVPHCSIRG…GNATCELNLH (88 aa)) folds into the Ig-like C2-type domain. The chain crosses the membrane as a helical span at residues 234–254 (AVIGGLLAAAIIIAIVWFLVV). The Cytoplasmic portion of the chain corresponds to 255 to 318 (KRKQKKQLPP…ANGETEEPTA (64 aa)). Residues 261–318 (QLPPTKEMKTGGNQYMAVSGEANEPPKENLGASEPTETIQFHDHAENAANGETEEPTA) form a disordered region.

In terms of tissue distribution, expressed in thymocytes.

Its subcellular location is the membrane. The polypeptide is V-set and immunoglobulin domain-containing protein 1 (vsig1) (Xenopus laevis (African clawed frog)).